We begin with the raw amino-acid sequence, 283 residues long: uncharacterized protein (283 aa).

The active site involves D121.

The protein belongs to the pseudouridine synthase RluA family.

It catalyses the reaction a uridine in RNA = a pseudouridine in RNA. This is an uncharacterized protein from Bacillus subtilis (strain 168).